The following is a 244-amino-acid chain: ATP synthase subunit a (244 aa).

A run of 5 helical transmembrane segments spans residues 17–37 (LTNILMITVASVIVLLIAILT), 75–95 (FLALGVTLLMYIFVSNMLGLP), 112–132 (DPAITLTLAVMVVALTHYYGV), 170–190 (LYGNIFAGEILLGLLAGLATS), and 221–241 (GAIQAFIFTMLTMVYMSHKIS).

Belongs to the ATPase A chain family. In terms of assembly, F-type ATPases have 2 components, CF(1) - the catalytic core - and CF(0) - the membrane proton channel. CF(1) has five subunits: alpha(3), beta(3), gamma(1), delta(1), epsilon(1). CF(0) has three main subunits: a(1), b(2) and c(9-12). The alpha and beta chains form an alternating ring which encloses part of the gamma chain. CF(1) is attached to CF(0) by a central stalk formed by the gamma and epsilon chains, while a peripheral stalk is formed by the delta and b chains. The F(1)F(0) complex interacts with SpoIIIJ and YqjG; YqgA is found in the same complex.

It localises to the cell membrane. Functionally, key component of the proton channel; it plays a direct role in the translocation of protons across the membrane. In Bacillus subtilis (strain 168), this protein is ATP synthase subunit a.